The chain runs to 318 residues: Taste receptor type 2 member 60 (318 aa).

The Extracellular segment spans residues 1–7 (MNGDHMV). A helical transmembrane segment spans residues 8–28 (LGSSVTDQKAIILVIILLLLC). The Cytoplasmic portion of the chain corresponds to 29–40 (LVAIAGNGFITA). A helical transmembrane segment spans residues 41-61 (ALGVEWVLRGTLLPCDKLLVS). Residues 62–88 (LRASRFCLQWVVMGKTIYVLLYPTAFP) lie on the Extracellular side of the membrane. Residues 89-109 (YNPVLQFLAFQWDFLNAATLW) traverse the membrane as a helical segment. At 110 to 128 (FSSWLSVFYCVKIATFTHP) the chain is on the cytoplasmic side. Residues 129-149 (VFLWLKHKLSEWVPWMFFSSV) traverse the membrane as a helical segment. Residues 150-183 (GLSSFTTILFFIGNHSIYQNYLRNHLQPWNVTGN) lie on the Extracellular side of the membrane. N-linked (GlcNAc...) asparagine glycans are attached at residues Asn163 and Asn179. The helical transmembrane segment at 184-204 (SIWSYCEKFYLFPVKMITWTM) threads the bilayer. The Cytoplasmic segment spans residues 205–234 (PTAVFFICMILLITSLGRHMEKALLTTSGF). The helical transmembrane segment at 235 to 255 (REPSVQAHVKALLALLSLAML) threads the bilayer. The Extracellular segment spans residues 256 to 264 (FISYFLSLV). A helical transmembrane segment spans residues 265–285 (LSAAGIFPPLDFKFWVGESVI). Topologically, residues 286-318 (YLCAGVHPIILLFSNRRLRAVLERCRSSRCRTP) are cytoplasmic.

Belongs to the G-protein coupled receptor T2R family.

It localises to the membrane. Receptor that may play a role in the perception of bitterness and is gustducin-linked. May play a role in sensing the chemical composition of the gastrointestinal content. The activity of this receptor may stimulate alpha gustducin, mediate PLC-beta-2 activation and lead to the gating of TRPM5. In Macaca mulatta (Rhesus macaque), this protein is Taste receptor type 2 member 60 (TAS2R60).